The following is a 119-amino-acid chain: Large ribosomal subunit protein uL18 (119 aa).

This sequence belongs to the universal ribosomal protein uL18 family. As to quaternary structure, part of the 50S ribosomal subunit; part of the 5S rRNA/L5/L18/L25 subcomplex. Contacts the 5S and 23S rRNAs.

This is one of the proteins that bind and probably mediate the attachment of the 5S RNA into the large ribosomal subunit, where it forms part of the central protuberance. The sequence is that of Large ribosomal subunit protein uL18 from Chlorobaculum tepidum (strain ATCC 49652 / DSM 12025 / NBRC 103806 / TLS) (Chlorobium tepidum).